Consider the following 230-residue polypeptide: Protein STK_02290 (230 aa).

In terms of domain architecture, AMMECR1 spans 15–213 (NLGKVLIKIA…EEKPKSEKIL (199 aa)).

This chain is Protein STK_02290, found in Sulfurisphaera tokodaii (strain DSM 16993 / JCM 10545 / NBRC 100140 / 7) (Sulfolobus tokodaii).